The chain runs to 194 residues: Peptidyl-tRNA hydrolase (194 aa).

Position 17 (tyrosine 17) interacts with tRNA. Catalysis depends on histidine 22, which acts as the Proton acceptor. Residues tyrosine 68, asparagine 70, and asparagine 116 each coordinate tRNA.

Belongs to the PTH family. In terms of assembly, monomer.

It is found in the cytoplasm. The catalysed reaction is an N-acyl-L-alpha-aminoacyl-tRNA + H2O = an N-acyl-L-amino acid + a tRNA + H(+). In terms of biological role, hydrolyzes ribosome-free peptidyl-tRNAs (with 1 or more amino acids incorporated), which drop off the ribosome during protein synthesis, or as a result of ribosome stalling. Catalyzes the release of premature peptidyl moieties from peptidyl-tRNA molecules trapped in stalled 50S ribosomal subunits, and thus maintains levels of free tRNAs and 50S ribosomes. This chain is Peptidyl-tRNA hydrolase, found in Pseudomonas putida (strain ATCC 700007 / DSM 6899 / JCM 31910 / BCRC 17059 / LMG 24140 / F1).